A 276-amino-acid polypeptide reads, in one-letter code: U6 snRNA phosphodiesterase 1 (276 aa).

Residues M1–E58 form a disordered region. H131 acts as the Proton acceptor in catalysis. Residues H131–S133, Y213, and D215–S221 each bind AMP. Residues Y213 and S217–S221 contribute to the UMP site. The active-site Proton donor is H219.

This sequence belongs to the 2H phosphoesterase superfamily. USB1 family.

It localises to the nucleus. It carries out the reaction a 3'-end uridylyl-uridine-RNA = a 3'-end 2',3'-cyclophospho-uridine-RNA + uridine. It catalyses the reaction a 3'-end uridylyl-adenosine-RNA = a 3'-end 2',3'-cyclophospho-uridine-RNA + adenosine. 3'-5' RNA exonuclease that trims the 3' end of oligo(U) and oligo(A) tracts of the pre-U6 small nuclear RNA (snRNA) molecule, leading to the formation of a mature U6 snRNA 3' end-terminated with a 2',3'-cyclic phosphate. Participates in the U6 snRNA 3' end processing that prevents U6 snRNA degradation. In addition also removes uridines from the 3' end of U6atac snRNA and possibly the vault RNA VTRNA1-1. In Danio rerio (Zebrafish), this protein is U6 snRNA phosphodiesterase 1.